We begin with the raw amino-acid sequence, 130 residues long: MVRISVLNDGLKSMYNAEKRGKRQVMIRPSSKVIIKFLIVMQKHGYIGEFEYVDDHRSGKIVVELNGRLNKCGVISPRFDVGVKEIEGWTARLLPSRQFGFIVLTTSAGIMDHEEARRKNVGGKVLGFFY.

This sequence belongs to the universal ribosomal protein uS8 family.

The polypeptide is Small ribosomal subunit protein uS8x (RPS15AD) (Arabidopsis thaliana (Mouse-ear cress)).